The primary structure comprises 548 residues: Chaperonin GroEL (548 aa).

Residues 30–33 (TLGP), lysine 51, 87–91 (DGTTT), glycine 415, 479–481 (NAA), and aspartate 495 contribute to the ATP site.

This sequence belongs to the chaperonin (HSP60) family. Forms a cylinder of 14 subunits composed of two heptameric rings stacked back-to-back. Interacts with the co-chaperonin GroES.

Its subcellular location is the cytoplasm. The catalysed reaction is ATP + H2O + a folded polypeptide = ADP + phosphate + an unfolded polypeptide.. Functionally, together with its co-chaperonin GroES, plays an essential role in assisting protein folding. The GroEL-GroES system forms a nano-cage that allows encapsulation of the non-native substrate proteins and provides a physical environment optimized to promote and accelerate protein folding. The chain is Chaperonin GroEL from Sodalis glossinidius (strain morsitans).